A 358-amino-acid polypeptide reads, in one-letter code: Very long chain fatty acid elongase AAEL008004 (358 aa).

7 helical membrane passes run 26 to 46 (WPLM…VYLV), 66 to 86 (LILY…EIGI), 115 to 135 (ACWW…FFVM), 147 to 167 (VIHH…TPGG), 171 to 191 (FFGL…LFTA), 207 to 227 (TSLQ…LLFI), and 234 to 254 (AFVW…NEFY). Positions 285 to 295 (SAVSSNGSAIT) are enriched in polar residues. A disordered region spans residues 285-322 (SAVSSNGSAITANGHHGKNGSVHHHSNGSATSNGTSLL). Residues 299–310 (HHGKNGSVHHHS) are compositionally biased toward basic residues. A compositionally biased stretch (polar residues) spans 311-322 (NGSATSNGTSLL).

It belongs to the ELO family.

The protein localises to the membrane. It catalyses the reaction a very-long-chain acyl-CoA + malonyl-CoA + H(+) = a very-long-chain 3-oxoacyl-CoA + CO2 + CoA. In terms of biological role, could be implicated in synthesis of very long chain fatty acids. This Aedes aegypti (Yellowfever mosquito) protein is Very long chain fatty acid elongase AAEL008004.